The following is a 466-amino-acid chain: Soluble pyridine nucleotide transhydrogenase (466 aa).

36–45 serves as a coordination point for FAD; that stretch reads ERYHNVGGGC.

This sequence belongs to the class-I pyridine nucleotide-disulfide oxidoreductase family. Requires FAD as cofactor.

The protein localises to the cytoplasm. It carries out the reaction NAD(+) + NADPH = NADH + NADP(+). Functionally, conversion of NADPH, generated by peripheral catabolic pathways, to NADH, which can enter the respiratory chain for energy generation. This Enterobacter sp. (strain 638) protein is Soluble pyridine nucleotide transhydrogenase.